The following is a 179-amino-acid chain: Large ribosomal subunit protein uL5 (179 aa).

It belongs to the universal ribosomal protein uL5 family. As to quaternary structure, part of the 50S ribosomal subunit; part of the 5S rRNA/L5/L18/L25 subcomplex. Contacts the 5S rRNA and the P site tRNA. Forms a bridge to the 30S subunit in the 70S ribosome.

Functionally, this is one of the proteins that bind and probably mediate the attachment of the 5S RNA into the large ribosomal subunit, where it forms part of the central protuberance. In the 70S ribosome it contacts protein S13 of the 30S subunit (bridge B1b), connecting the 2 subunits; this bridge is implicated in subunit movement. Contacts the P site tRNA; the 5S rRNA and some of its associated proteins might help stabilize positioning of ribosome-bound tRNAs. This chain is Large ribosomal subunit protein uL5, found in Buchnera aphidicola subsp. Acyrthosiphon pisum (strain APS) (Acyrthosiphon pisum symbiotic bacterium).